The chain runs to 551 residues: Membrane protein insertase YidC (551 aa).

Residues 3 to 23 (ANHIRILLLVTIAIMFISLMG) form a helical membrane-spanning segment. Residues 33 to 55 (NTKQQTSATQNNSHYDNADSSTN) are disordered. Helical transmembrane passes span 361 to 381 (LVGN…LIFY), 431 to 451 (LSGC…YWVL), and 504 to 524 (VMMF…SGLV).

Belongs to the OXA1/ALB3/YidC family. Type 1 subfamily. In terms of assembly, interacts with the Sec translocase complex via SecD. Specifically interacts with transmembrane segments of nascent integral membrane proteins during membrane integration.

The protein localises to the cell inner membrane. Its function is as follows. Required for the insertion and/or proper folding and/or complex formation of integral membrane proteins into the membrane. Involved in integration of membrane proteins that insert both dependently and independently of the Sec translocase complex, as well as at least some lipoproteins. Aids folding of multispanning membrane proteins. In Francisella tularensis subsp. holarctica (strain OSU18), this protein is Membrane protein insertase YidC.